The primary structure comprises 1201 residues: Potassium/sodium hyperpolarization-activated cyclic nucleotide-gated channel 4 (1201 aa).

The Cytoplasmic portion of the chain corresponds to 1–263 (MDKLPPSMRK…IIHPYSDFRF (263 aa)). The interval 24 to 183 (WIMDEEEDGE…PASASCEQPS (160 aa)) is disordered. Residues 26 to 36 (MDEEEDGEEEG) show a composition bias toward acidic residues. Residues 105–118 (SRGGGSGGAGGGSS) show a composition bias toward gly residues. A compositionally biased stretch (basic and acidic residues) spans 121 to 132 (HLHDSAEERRLI). Residue serine 139 is modified to Phosphoserine. The segment covering 164 to 174 (ASPPPQQPPQP) has biased composition (pro residues). The interval 209 to 260 (GQSGFMQRQFGAMLQPGVNKFSLRMFGSQKAVEREQERVKSAGFWIIHPYSD) is involved in subunit assembly. The chain crosses the membrane as a helical span at residues 264-286 (YWDLTMLLLMVGNLIIIPVGITF). Topologically, residues 287 to 293 (FKDENTT) are extracellular. Residues 294-314 (PWIVFNVVSDTFFLIDLVLNF) form a helical membrane-spanning segment. The Cytoplasmic segment spans residues 315–336 (RTGIVVEDNTEIILDPQRIKMK). The helical transmembrane segment at 337–359 (YLKSWFVVDFISSIPVDYIFLIV) threads the bilayer. Residues 360–378 (ETRIDSEVYKTARALRIVR) are Extracellular-facing. Residues 379–399 (FTKILSLLRLLRLSRLIRYIH) form a helical; Voltage-sensor membrane-spanning segment. Residues 400-413 (QWEEIFHMTYDLAS) are Cytoplasmic-facing. The chain crosses the membrane as a helical span at residues 414–436 (AVVRIVNLIGMMLLLCHWDGCLQ). At 437–464 (FLVPMLQDFPHDCWVSINGMVNNSWGKQ) the chain is on the extracellular side. The N-linked (GlcNAc...) asparagine glycan is linked to asparagine 458. Positions 465-486 (YSYALFKAMSHMLCIGYGRQAP) form an intramembrane region, pore-forming. At 487–491 (VGMSD) the chain is on the extracellular side. A helical transmembrane segment spans residues 492–517 (VWLTMLSMIVGATCYAMFIGHATALI). The Cytoplasmic portion of the chain corresponds to 518–1201 (QSLDSSRRQY…PVRSKLPSNL (684 aa)). 3',5'-cyclic GMP contacts are provided by tyrosine 559, lysine 562, phenylalanine 564, and glutamate 566. 3',5'-cyclic AMP contacts are provided by glycine 659, glutamate 660, cysteine 662, arginine 669, threonine 670, valine 673, and arginine 710. Disordered regions lie at residues 804-902 (AIFR…TAAA) and 914-1201 (ALGG…PSNL). Composition is skewed to low complexity over residues 831 to 856 (SLIP…SSSS) and 866 to 880 (SAPP…SSSS). Pro residues predominate over residues 881-894 (SPPPGACGSPPAPT). Low complexity-rich tracts occupy residues 915–939 (LGGS…SPQA) and 967–995 (RSPS…SSTP). Over residues 1029-1042 (GHSPGPPRTFPSAP) the composition is skewed to pro residues. Residues 1045 to 1056 (ASGSHGSLLLPP) show a composition bias toward low complexity. Residues serine 1105 and serine 1108 each carry the phosphoserine modification. The span at 1122-1134 (AGGGSGSSGGLGP) shows a compositional bias: gly residues.

It belongs to the potassium channel HCN family. As to quaternary structure, homotetramer. The potassium channel is composed of a homo- or heterotetrameric complex of pore-forming subunits. Interacts with PEX5L with a 4:4 HCN4:PEX5L stoichiometry; reduces the effects of cAMP on the voltage-dependence and rate of activation. Interacts with IRAG1; regulates HCN4 channel activity. Interacts with IRAG2; regulates HCN4 channel activity. S-palmitoylated. Detected in a subset of elongated cells in taste buds.

It is found in the cell membrane. The enzyme catalyses K(+)(in) = K(+)(out). The catalysed reaction is Na(+)(in) = Na(+)(out). Its activity is regulated as follows. Activated by cAMP, and to a lesser extent by cGMP and cCMP. cAMP binding causes a conformation change that leads to the assembly of an active tetramer and channel opening. Binding of cAMP removes a tonic inhibition conferred by cyclic nucleotide-binding domain (CNBD) on channel opening. Cyclic dinucleotides can modulate HCN4 channel; cyclic dinucleotides acting as potent antagonists of cAMP. Inhibited by extracellular Cs(+) ions. Auxiliary subunits can also regulate HCN4 channel. IRAG1 causes a gain-of-function by shifting HCN4 activation to more depolarized membrane potentials in the absence of cAMP. In contrast, IRAG2 causes a loss-of-function by inhibiting cAMP-dependent potentiation of HCN4 activation. Its function is as follows. Hyperpolarization-activated ion channel that are permeable to Na(+) and K(+) ions with very slow activation and inactivation. Exhibits higher selectivity for K(+) over Na(+) ions. Contributes to the native pacemaker currents in heart (If) that regulate the rhythm of heart beat. Contributes to the native pacemaker currents in neurons (Ih). May mediate responses to sour stimuli. The sequence is that of Potassium/sodium hyperpolarization-activated cyclic nucleotide-gated channel 4 (Hcn4) from Mus musculus (Mouse).